Here is a 167-residue protein sequence, read N- to C-terminus: UPF0114 protein in repA1-repA2 intergenic region (167 aa).

3 helical membrane-spanning segments follow: residues 15–35 (LMFPVYVGLSFGFILLTLKFF), 53–73 (LVLVVLSLIDIALVGGLLVMV), and 136–156 (IMLCVIIHLTFVLSAFGMAYI).

This sequence belongs to the UPF0114 family.

It localises to the cell membrane. This is UPF0114 protein in repA1-repA2 intergenic region from Buchnera aphidicola subsp. Diuraphis noxia.